A 141-amino-acid chain; its full sequence is Holo-[acyl-carrier-protein] synthase (141 aa).

Mg(2+)-binding residues include aspartate 7 and glutamate 57.

The protein belongs to the P-Pant transferase superfamily. AcpS family. Mg(2+) is required as a cofactor.

It localises to the cytoplasm. The catalysed reaction is apo-[ACP] + CoA = holo-[ACP] + adenosine 3',5'-bisphosphate + H(+). In terms of biological role, transfers the 4'-phosphopantetheine moiety from coenzyme A to a Ser of acyl-carrier-protein. The chain is Holo-[acyl-carrier-protein] synthase from Corynebacterium efficiens (strain DSM 44549 / YS-314 / AJ 12310 / JCM 11189 / NBRC 100395).